Reading from the N-terminus, the 387-residue chain is MKETRAEKRKKDKSDRATVDKVLDKRTLKVLERLQARGKLVNLQGSLCTGKESNVYLGEASTSLCSKFIKNRYSVTEEPGREGQIVPVVVKIFKTSIMSFRDRERYIRSEKRFQRFCTSNSRKLIKVWAEKEVRNLKRLNNAGIPSPEPIYLKNNILVMTQIGRCSEVAPRLRDASIKDLEGCYQQCVKIIRDMYKKAGLVHADLSEFNLLYFEGVVYVIDVGQSVEIDHDNAQRFLIMDINNINSFFSRKGVSVAKGNDLFEEISGNVIPLYLKDIDIGRDAFIPSRVSEVGNEEDLLAFAADSRSREFGSTTDSDLSSTGEASVEDSDASLGATESRGGGNIREEKKRKKKTVKELNRIRRASRISKKEKKRIFKRYIGMKKRKN.

The Protein kinase domain maps to 41-387 (VNLQGSLCTG…RYIGMKKRKN (347 aa)). An ATP-binding site is contributed by K91. The Proton acceptor role is filled by D204. Mg(2+) is bound by residues N209 and D221. The active-site 4-aspartylphosphate intermediate is D221. Residues 309-372 (EFGSTTDSDL…RASRISKKEK (64 aa)) are disordered. Positions 312 to 321 (STTDSDLSST) are enriched in low complexity. The segment covering 361 to 372 (IRRASRISKKEK) has biased composition (basic residues).

The protein belongs to the protein kinase superfamily. RIO-type Ser/Thr kinase family. It depends on Mg(2+) as a cofactor.

Its subcellular location is the cytoplasm. It catalyses the reaction L-seryl-[protein] + ATP = O-phospho-L-seryl-[protein] + ADP + H(+). The catalysed reaction is L-threonyl-[protein] + ATP = O-phospho-L-threonyl-[protein] + ADP + H(+). The enzyme catalyses ATP + H2O = ADP + phosphate + H(+). In terms of biological role, required for the final endonucleolytic cleavage at site D converting 20S pre-rRNA into the mature 18S rRNA. Required for the final steps of cytoplasmic maturation of the 40S ribosomal subunit. Despite the protein kinase domain is proposed to act predominantly as an ATPase. Has a role in the cell cycle where it is required for entrance into S-phase and in the control of the onset of anaphase. Appears to also be involved in the maintenance of chromosome stability and correct mitotic segregation. The sequence is that of Probable serine/threonine-protein kinase RIO1 homolog (RIO1) from Encephalitozoon cuniculi (strain GB-M1) (Microsporidian parasite).